Consider the following 1241-residue polypeptide: Putative urea carboxylase (1241 aa).

The 457-residue stretch at 3–459 folds into the Biotin carboxylation domain; that stretch reads ALKTLLIANR…LTKFLNNFEY (457 aa). K117 and E201 together coordinate ATP. The ATP-grasp domain maps to 121–321; the sequence is RELATKAGVP…LVELMLRQAD (201 aa). The region spanning 1159–1239 is the Biotinyl-binding domain; the sequence is EELLKDPEIT…EAGKPLMLVR (81 aa). K1202 is subject to N6-biotinyllysine.

The cofactor is biotin.

The catalysed reaction is urea + hydrogencarbonate + ATP = urea-1-carboxylate + ADP + phosphate + H(+). In terms of biological role, involved in the utilization of lactams. Required for the conversion of exogenous 2-pyrrolidinone (gamma-butyrolactam) to endogenous gamma-amino-n-butyrate (GABA). The chain is Putative urea carboxylase (lamA) from Emericella nidulans (strain FGSC A4 / ATCC 38163 / CBS 112.46 / NRRL 194 / M139) (Aspergillus nidulans).